Reading from the N-terminus, the 149-residue chain is METKSDYEDAVFYFVDDDEICSRDSIIDLIDEYITWRNHVIVFNKDITSCGRLYKELIKFDDVAIRYYGIDKINEIVEAMSEGDHYINLTEVHDQESLFATIGICAKITEHWGYKKISESKFQSLGNITDLMTDDNINILILFLEKKMN.

This sequence belongs to the orthopoxvirus OPG044 family. In terms of assembly, interacts with DDX3; this interaction inhibits DDX3 and suppresses DDX3-mediated IFN-beta promoter induction. Interacts with TRAF6 and IRAK2; these interactions suppress TLR-dependent NF-KappaB activation.

Its subcellular location is the host cytoplasm. In terms of biological role, virulence factor that affects the acute immune response to infection. Bcl-2-like protein which, through its interaction with the DEAD box RNA helicase DDX3X/DDX3, prevents TBK1/IKKepsilon-mediated IRF3 activation. Contributes to virulence by binding to the host TRAF6 and IRAK2 and preventing host NF-kappa-B activation. This chain is Protein K7 (OPG044), found in Cynomys gunnisoni (Gunnison's prairie dog).